Reading from the N-terminus, the 185-residue chain is Small ribosomal subunit protein uS5c (185 aa).

Positions 26-89 (FVERLIKISR…ADGRKNLIKI (64 aa)) constitute an S5 DRBM domain.

The protein belongs to the universal ribosomal protein uS5 family. In terms of assembly, part of the 30S ribosomal subunit. Contacts protein S4.

The protein localises to the plastid. Its subcellular location is the chloroplast. In terms of biological role, with S4 and S12 plays an important role in translational accuracy. This chain is Small ribosomal subunit protein uS5c (rps5), found in Trieres chinensis (Marine centric diatom).